Consider the following 634-residue polypeptide: Probable beta-glucosidase C (634 aa).

Positions 1–19 are cleaved as a signal peptide; that stretch reads MRIDCTVASLTALASGCQA. 4 N-linked (GlcNAc...) asparagine glycosylation sites follow: Asn-90, Asn-112, Asn-219, and Asn-270. Asp-337 is a catalytic residue. Residues Asn-360, Asn-476, Asn-484, and Asn-524 are each glycosylated (N-linked (GlcNAc...) asparagine).

The protein belongs to the glycosyl hydrolase 3 family.

The protein localises to the secreted. The enzyme catalyses Hydrolysis of terminal, non-reducing beta-D-glucosyl residues with release of beta-D-glucose.. It functions in the pathway glycan metabolism; cellulose degradation. Functionally, beta-glucosidases are one of a number of cellulolytic enzymes involved in the degradation of cellulosic biomass. Catalyzes the last step releasing glucose from the inhibitory cellobiose. The protein is Probable beta-glucosidase C (bglC) of Aspergillus flavus (strain ATCC 200026 / FGSC A1120 / IAM 13836 / NRRL 3357 / JCM 12722 / SRRC 167).